The following is a 148-amino-acid chain: MAFKYQLLLSAAVMLAILVATATSFGDSCAPGDALPHNPLRACRTYVVSQICHQGPRLLTSDMKRRCCDELSAIPAYCRCEALRIIMQGVVTWQGAFEGAYFKDSPNCPRERQTSYAANLVTPQECNLGTIHGSAYCPELQPGYGVVL.

The N-terminal stretch at 1 to 24 (MAFKYQLLLSAAVMLAILVATATS) is a signal peptide.

It belongs to the protease inhibitor I6 (cereal trypsin/alpha-amylase inhibitor) family. In terms of processing, five disulfide bonds, which are essential for the inhibitor activity, are probably present. In terms of tissue distribution, expressed in the developing endosperm. Not detected in embryo, aleurone, coleoptile, roots and leaves.

The protein resides in the secreted. Its function is as follows. Inhibits trypsin in vitro. Probably plays a protective role through inhibition of insect midgut proteases. The sequence is that of Trypsin inhibitor CMe (ITR1) from Hordeum vulgare (Barley).